A 367-amino-acid polypeptide reads, in one-letter code: Glutamate 5-kinase (367 aa).

Position 10 (Lys-10) interacts with ATP. 3 residues coordinate substrate: Ser-50, Asp-137, and Asn-149. Residues 169–170 and 211–217 each bind ATP; these read TD and TGGMSTK. The region spanning 275–353 is the PUA domain; sequence AGEITVDEGA…QQIDAILGYE (79 aa).

Belongs to the glutamate 5-kinase family.

It localises to the cytoplasm. The enzyme catalyses L-glutamate + ATP = L-glutamyl 5-phosphate + ADP. Its pathway is amino-acid biosynthesis; L-proline biosynthesis; L-glutamate 5-semialdehyde from L-glutamate: step 1/2. Its function is as follows. Catalyzes the transfer of a phosphate group to glutamate to form L-glutamate 5-phosphate. This chain is Glutamate 5-kinase, found in Salmonella agona (strain SL483).